Consider the following 150-residue polypeptide: Lipoprotein signal peptidase (150 aa).

3 helical membrane-spanning segments follow: residues 5 to 25 (LSLV…NWVV), 59 to 79 (QQWF…WFLW), and 82 to 102 (MGQN…LGNF). Residues Asp113 and Asp129 contribute to the active site. The chain crosses the membrane as a helical span at residues 124-144 (IFNIADILLSVGFVVLFIAIL).

Belongs to the peptidase A8 family.

The protein resides in the cell membrane. The catalysed reaction is Release of signal peptides from bacterial membrane prolipoproteins. Hydrolyzes -Xaa-Yaa-Zaa-|-(S,diacylglyceryl)Cys-, in which Xaa is hydrophobic (preferably Leu), and Yaa (Ala or Ser) and Zaa (Gly or Ala) have small, neutral side chains.. It functions in the pathway protein modification; lipoprotein biosynthesis (signal peptide cleavage). In terms of biological role, this protein specifically catalyzes the removal of signal peptides from prolipoproteins. The protein is Lipoprotein signal peptidase of Lactococcus lactis subsp. cremoris (strain SK11).